The chain runs to 465 residues: Cysteine--tRNA ligase (465 aa).

Residue Cys-27 coordinates Zn(2+). Residues 29–39 (PTVYDDAHLGH) carry the 'HIGH' region motif. Residues Cys-207, His-237, and Glu-241 each coordinate Zn(2+). Positions 269-273 (KMSKS) match the 'KMSKS' region motif. Lys-272 lines the ATP pocket.

Belongs to the class-I aminoacyl-tRNA synthetase family. As to quaternary structure, monomer. Requires Zn(2+) as cofactor.

The protein resides in the cytoplasm. The catalysed reaction is tRNA(Cys) + L-cysteine + ATP = L-cysteinyl-tRNA(Cys) + AMP + diphosphate. The protein is Cysteine--tRNA ligase of Helicobacter acinonychis (strain Sheeba).